The primary structure comprises 422 residues: Ubiquitin-conjugating enzyme E2 Q1 (422 aa).

An N-acetylmethionine modification is found at Met1. The segment covering Met1–Ala24 has biased composition (low complexity). 2 disordered regions span residues Met1 to Cys40 and Gln173 to Gly221. Over residues Pro25 to Pro35 the composition is skewed to gly residues. A compositionally biased stretch (acidic residues) spans Val185–Asp200. Residues Ala212–Gly221 show a composition bias toward basic and acidic residues. One can recognise a UBC core domain in the interval Gln251 to Tyr415. Cys351 (glycyl thioester intermediate) is an active-site residue.

The protein belongs to the ubiquitin-conjugating enzyme family. In terms of assembly, monomer and homodimer. Only the homodimer is linked to ubiquitin through thiolester activation. Interacts (via N-terminus) with B4GALT1 (via N-terminal cytoplasmic domain); the interaction is direct. Autoubiquitinated in vitro in the presence of NEDD4L. Expressed in liver, brain, heart, spleen, lung, kidney, muscle, ovary, epididymis, testis and placenta. Also expressed in thymus and ES cells. Only expressed in the uterus during pregnancy. Expressed in oocytes and during subsequent embryonic development stages (4-cell stage, blastocyst, 8.5 dpc, 13.5 dpc, 16.5 dpc and 18.5 dpc).

The protein localises to the nucleus. It localises to the cell projection. Its subcellular location is the filopodium. It is found in the cytoplasm. The protein resides in the cytosol. The enzyme catalyses S-ubiquitinyl-[E1 ubiquitin-activating enzyme]-L-cysteine + [E2 ubiquitin-conjugating enzyme]-L-cysteine = [E1 ubiquitin-activating enzyme]-L-cysteine + S-ubiquitinyl-[E2 ubiquitin-conjugating enzyme]-L-cysteine.. It functions in the pathway protein modification; protein ubiquitination. In terms of biological role, catalyzes the covalent attachment of ubiquitin to other proteins. Involved in female fertility and embryo implantation. May be involved in hormonal homeostasis in females. Involved in regulation of B4GALT1 cell surface expression, B4GALT1-mediated cell adhesion to laminin and embryoid body formation. The polypeptide is Ubiquitin-conjugating enzyme E2 Q1 (Ube2q1) (Mus musculus (Mouse)).